We begin with the raw amino-acid sequence, 2264 residues long: Protein Ycf2 (2264 aa).

1611-1618 (GSIGTGRS) lines the ATP pocket.

The protein belongs to the Ycf2 family.

It localises to the plastid. The protein localises to the chloroplast stroma. Probable ATPase of unknown function. Its presence in a non-photosynthetic plant (Epifagus virginiana) and experiments in tobacco indicate that it has an essential function which is probably not related to photosynthesis. This Lactuca sativa (Garden lettuce) protein is Protein Ycf2.